We begin with the raw amino-acid sequence, 132 residues long: Profilin-1 (132 aa).

It belongs to the profilin family. In terms of assembly, occurs in many kinds of cells as a complex with monomeric actin in a 1:1 ratio. As to expression, expressed in the nerve ring during late embryonic stages. In adults, expression is seen in the neurons, vulva and somatic gonad.

The protein localises to the cytoplasm. It is found in the cytoskeleton. In terms of biological role, binds to actin and affects the structure of the cytoskeleton. At high concentrations, profilin prevents the polymerization of actin, whereas it enhances it at low concentrations. By binding to PIP2, it inhibits the formation of IP3 and DG. Also binds to poly(L-proline) and phosphatidylinositol 4,5-bisphosphate micelles. The polypeptide is Profilin-1 (pfn-1) (Caenorhabditis elegans).